The chain runs to 202 residues: Stress enhanced protein 2, chloroplastic (202 aa).

A chloroplast-targeting transit peptide spans 1–60 (MAMATRAIRYQLPSPRFRAPRCESSEPIKQIQIQQRPRGGDLAENGKIVLQPRLCTLRSY). 2 consecutive transmembrane segments (helical) span residues 111–131 (LAMI…NSLF) and 142–162 (AIGA…LTIS).

This sequence belongs to the ELIP/psbS family.

It localises to the plastid. It is found in the chloroplast thylakoid membrane. Functionally, may be involved in non-photochemical quenching, a process that maintains the balance between dissipation and utilization of light energy to minimize generation of oxidizing molecules, thereby protecting the plant against photo-oxidative damage. May play a photoprotective role in the thylakoid membrane in response to light stress. The protein is Stress enhanced protein 2, chloroplastic of Arabidopsis thaliana (Mouse-ear cress).